A 378-amino-acid polypeptide reads, in one-letter code: UDP-N-acetylglucosamine--N-acetylmuramyl-(pentapeptide) pyrophosphoryl-undecaprenol N-acetylglucosamine transferase (378 aa).

UDP-N-acetyl-alpha-D-glucosamine-binding positions include 24 to 26 (TAG), asparagine 144, arginine 181, serine 215, and glutamine 310.

The protein belongs to the glycosyltransferase 28 family. MurG subfamily.

The protein resides in the cell membrane. The catalysed reaction is di-trans,octa-cis-undecaprenyl diphospho-N-acetyl-alpha-D-muramoyl-L-alanyl-D-glutamyl-meso-2,6-diaminopimeloyl-D-alanyl-D-alanine + UDP-N-acetyl-alpha-D-glucosamine = di-trans,octa-cis-undecaprenyl diphospho-[N-acetyl-alpha-D-glucosaminyl-(1-&gt;4)]-N-acetyl-alpha-D-muramoyl-L-alanyl-D-glutamyl-meso-2,6-diaminopimeloyl-D-alanyl-D-alanine + UDP + H(+). It participates in cell wall biogenesis; peptidoglycan biosynthesis. In terms of biological role, cell wall formation. Catalyzes the transfer of a GlcNAc subunit on undecaprenyl-pyrophosphoryl-MurNAc-pentapeptide (lipid intermediate I) to form undecaprenyl-pyrophosphoryl-MurNAc-(pentapeptide)GlcNAc (lipid intermediate II). This Nocardia farcinica (strain IFM 10152) protein is UDP-N-acetylglucosamine--N-acetylmuramyl-(pentapeptide) pyrophosphoryl-undecaprenol N-acetylglucosamine transferase.